The sequence spans 279 residues: Ribosomal RNA small subunit methyltransferase I (279 aa).

The protein belongs to the methyltransferase superfamily. RsmI family.

Its subcellular location is the cytoplasm. The catalysed reaction is cytidine(1402) in 16S rRNA + S-adenosyl-L-methionine = 2'-O-methylcytidine(1402) in 16S rRNA + S-adenosyl-L-homocysteine + H(+). Its function is as follows. Catalyzes the 2'-O-methylation of the ribose of cytidine 1402 (C1402) in 16S rRNA. This is Ribosomal RNA small subunit methyltransferase I from Synechocystis sp. (strain ATCC 27184 / PCC 6803 / Kazusa).